The following is a 147-amino-acid chain: Large ribosomal subunit protein bL9 (147 aa).

Belongs to the bacterial ribosomal protein bL9 family.

Its function is as follows. Binds to the 23S rRNA. In Clostridium botulinum (strain 657 / Type Ba4), this protein is Large ribosomal subunit protein bL9.